Consider the following 223-residue polypeptide: UPF0758 protein Plut_0598 (223 aa).

One can recognise an MPN domain in the interval 100 to 222; that stretch reads RVQGAKDVFE…WFSFRESNLL (123 aa). The Zn(2+) site is built by H171, H173, and D184. Positions 171-184 match the JAMM motif motif; the sequence is HNHPSGDTEPSNAD.

The protein belongs to the UPF0758 family.

This Chlorobium luteolum (strain DSM 273 / BCRC 81028 / 2530) (Pelodictyon luteolum) protein is UPF0758 protein Plut_0598.